The sequence spans 205 residues: MRQKLDRLLEQAQINLTDQQKEQLVGFVRLLDKWNKAYNLTSVRNPDEMLVKHILDSLVVSEHLQGNNFIDVGTGPGLPGIPLAIANPDKQFVLLDSLGKRITFIKNALRELGITNVTPVLSRVEEYKEQTFDGVLSRAFASLNDMVDWCYHLPNPQGKFYALKGIYAESEVQEIKNPIGLEKVIPLSVPELVGERHLVLLNKPN.

S-adenosyl-L-methionine-binding positions include Gly-73, Leu-78, Val-124 to Glu-125, and Arg-138.

This sequence belongs to the methyltransferase superfamily. RNA methyltransferase RsmG family.

It is found in the cytoplasm. It catalyses the reaction guanosine(527) in 16S rRNA + S-adenosyl-L-methionine = N(7)-methylguanosine(527) in 16S rRNA + S-adenosyl-L-homocysteine. Specifically methylates the N7 position of guanine in position 527 of 16S rRNA. The chain is Ribosomal RNA small subunit methyltransferase G from Actinobacillus pleuropneumoniae serotype 5b (strain L20).